The primary structure comprises 568 residues: General O-oligosaccharyltransferase (568 aa).

Helical transmembrane passes span 17-37 (VAVM…LAWL), 46-66 (LTFA…ALFL), 78-98 (LALP…VVDF), 101-121 (ALLS…GYNL), 132-152 (FTLS…IACI), 176-196 (FAQP…CLYL), 214-234 (IVFA…LFFI), 251-271 (YAVL…PRFT), 349-369 (LLVW…LIWI), 376-396 (AKTT…IHTL), 397-417 (LEYP…MGLI), and 429-449 (VPVS…ALIW).

Belongs to the PglL O-oligosaccharyltransferase family.

It is found in the cell membrane. Functionally, catalyzes the O-glycosylation of multiple protein targets. Is responsible for general protein glycosylation within A.baylyi ADP1. Does not act as an O-antigen ligase. This Acinetobacter baylyi (strain ATCC 33305 / BD413 / ADP1) protein is General O-oligosaccharyltransferase.